We begin with the raw amino-acid sequence, 178 residues long: Large ribosomal subunit protein bL25 (178 aa).

It belongs to the bacterial ribosomal protein bL25 family. CTC subfamily. In terms of assembly, part of the 50S ribosomal subunit; part of the 5S rRNA/L5/L18/L25 subcomplex. Contacts the 5S rRNA. Binds to the 5S rRNA independently of L5 and L18.

Its function is as follows. This is one of the proteins that binds to the 5S RNA in the ribosome where it forms part of the central protuberance. This is Large ribosomal subunit protein bL25 from Helicobacter hepaticus (strain ATCC 51449 / 3B1).